We begin with the raw amino-acid sequence, 302 residues long: DNA-binding transcriptional activator HetR (302 aa).

The active site involves S153.

Belongs to the peptidase S48 family. In terms of assembly, homodimer; disulfide-linked.

Functionally, might be involved in temporal and/or spatial regulation of nitrogen fixation. Dimerization is required for DNA-binding. Has both a protease and a DNA-binding activity. This is DNA-binding transcriptional activator HetR from Trichodesmium erythraeum (strain IMS101).